The chain runs to 264 residues: Ribosomal RNA small subunit methyltransferase J (264 aa).

Residues 111-112 (RD), 127-128 (ER), and Asp180 each bind S-adenosyl-L-methionine.

This sequence belongs to the methyltransferase superfamily. RsmJ family.

It is found in the cytoplasm. It carries out the reaction guanosine(1516) in 16S rRNA + S-adenosyl-L-methionine = N(2)-methylguanosine(1516) in 16S rRNA + S-adenosyl-L-homocysteine + H(+). Functionally, specifically methylates the guanosine in position 1516 of 16S rRNA. The polypeptide is Ribosomal RNA small subunit methyltransferase J (Alkalilimnicola ehrlichii (strain ATCC BAA-1101 / DSM 17681 / MLHE-1)).